We begin with the raw amino-acid sequence, 508 residues long: Proline--tRNA ligase 2 (508 aa).

This sequence belongs to the class-II aminoacyl-tRNA synthetase family. ProS type 3 subfamily. In terms of assembly, homodimer.

Its subcellular location is the cytoplasm. It catalyses the reaction tRNA(Pro) + L-proline + ATP = L-prolyl-tRNA(Pro) + AMP + diphosphate. In terms of biological role, catalyzes the attachment of proline to tRNA(Pro) in a two-step reaction: proline is first activated by ATP to form Pro-AMP and then transferred to the acceptor end of tRNA(Pro). This chain is Proline--tRNA ligase 2, found in Bacillus anthracis.